The sequence spans 278 residues: Large ribosomal subunit protein uL2 (278 aa).

Disordered regions lie at residues 1–58 and 225–278; these read MAIR…GGGH and VMNP…KNKR. The segment covering 37-58 has biased composition (basic residues); that stretch reads LHGRGGRNAHGRITTRHKGGGH. Basic and acidic residues predominate over residues 253–267; that stretch reads PEGRTRKNKASDKLI. The segment covering 268–278 has biased composition (basic residues); that stretch reads VRRRRTGKNKR.

It belongs to the universal ribosomal protein uL2 family. As to quaternary structure, part of the 50S ribosomal subunit. Forms a bridge to the 30S subunit in the 70S ribosome.

Functionally, one of the primary rRNA binding proteins. Required for association of the 30S and 50S subunits to form the 70S ribosome, for tRNA binding and peptide bond formation. It has been suggested to have peptidyltransferase activity; this is somewhat controversial. Makes several contacts with the 16S rRNA in the 70S ribosome. The sequence is that of Large ribosomal subunit protein uL2 from Rhodococcus opacus (strain B4).